Consider the following 442-residue polypeptide: tRNA modification GTPase MnmE (442 aa).

(6S)-5-formyl-5,6,7,8-tetrahydrofolate contacts are provided by Arg23, Glu82, and Lys121. The TrmE-type G domain maps to 215 to 364 (GTSLILAGKP…VKQALIQWMQ (150 aa)). A K(+)-binding site is contributed by Asn225. Residues 225–230 (NVGKSS), 244–250 (THIPGTT), 269–272 (DTAG), and 325–328 (NKAD) contribute to the GTP site. Ser229 contacts Mg(2+). Residues Thr244, Ile246, and Thr249 each coordinate K(+). Residue Thr250 participates in Mg(2+) binding. Lys442 provides a ligand contact to (6S)-5-formyl-5,6,7,8-tetrahydrofolate.

This sequence belongs to the TRAFAC class TrmE-Era-EngA-EngB-Septin-like GTPase superfamily. TrmE GTPase family. Homodimer. Heterotetramer of two MnmE and two MnmG subunits. The cofactor is K(+).

Its subcellular location is the cytoplasm. Its function is as follows. Exhibits a very high intrinsic GTPase hydrolysis rate. Involved in the addition of a carboxymethylaminomethyl (cmnm) group at the wobble position (U34) of certain tRNAs, forming tRNA-cmnm(5)s(2)U34. The sequence is that of tRNA modification GTPase MnmE from Chlamydia pneumoniae (Chlamydophila pneumoniae).